Here is a 1912-residue protein sequence, read N- to C-terminus: Receptor-type tyrosine-protein phosphatase delta (1912 aa).

The first 20 residues, 1–20 (MVPVARPLSLLLTFFLCACA), serve as a signal peptide directing secretion. Over 21–1266 (ETPPRFTRTP…PQPITDEEEG (1246 aa)) the chain is Extracellular. Ig-like C2-type domains follow at residues 24–114 (PRFT…TRLT) and 126–224 (PTID…ANLY). 2 disulfides stabilise this stretch: Cys-45–Cys-98 and Cys-147–Cys-207. Residues 181 to 189 (ESIGGTPIR) are mini-exon peptide A9; sufficient for interaction with IL1RAPL1. Residues 227 to 230 (ELRE) are mini-exon peptide B; required for interaction with SLITRK2 and in the function in pre-synaptic differentiation; Acts as an adjustable linker to control relative positions and orientations of the PTPRD second and third immunoglobilin domains for their simultaneous interactions with the first immunoglobilin domain of IL1RAPL1 and IL1RAP; Modulates affinity for IL1RAPL1 and IL1RAP. The Ig-like C2-type 3 domain occupies 236-318 (PRFSIPPTNH…GVIEAIAQIT (83 aa)). N-linked (GlcNAc...) asparagine glycosylation is found at Asn-254 and Asn-299. A disulfide bridge links Cys-257 with Cys-302. 8 consecutive Fibronectin type-III domains span residues 325 to 415 (PPGT…TSEQ), 420 to 516 (APRD…TGVP), 518 to 607 (QPLN…TMQS), 612 to 709 (PPQD…TDED), 714 to 822 (PPRK…TTGA), 823 to 916 (VPGK…VPEE), 921 to 1016 (FPQN…TLPV), and 1020 to 1106 (FAKN…TAPD). Residues Asn-724 and Asn-832 are each glycosylated (N-linked (GlcNAc...) asparagine). The helical transmembrane segment at 1267–1287 (LIWVVGPVLAVVFIICIVIAI) threads the bilayer. Residues 1288–1912 (LLYKRKRAES…YLGSFDHYAT (625 aa)) are Cytoplasmic-facing. A disordered region spans residues 1298–1319 (ESRKSSLPNSKEVPSHHPTDPV). Basic and acidic residues predominate over residues 1310 to 1319 (VPSHHPTDPV). 2 consecutive Tyrosine-protein phosphatase domains span residues 1357 to 1612 (FSQE…LLEA) and 1644 to 1903 (MELE…ALEY). Substrate-binding positions include Asp-1521, 1553 to 1559 (CSAGVGR), and Gln-1597. The Phosphocysteine intermediate role is filled by Cys-1553. Cys-1844 (phosphocysteine intermediate) is an active-site residue.

Belongs to the protein-tyrosine phosphatase family. Receptor class 2A subfamily. In terms of assembly, interacts with PPFIA1, PPFIA2 and PPFIA3. Interacts (via extracellular domain) with SLITRK4 (via LRR 1 and 2 repeats). Interacts with SLITRK2; induces presynaptic differentiation. Interacts (via the second immunoglobilin domain) with IL1RAPL1 (via the first immunoglobilin domain); induces pre- and postsynaptic differentiation of neurons and synapse formation. Isoform G, isoform H, isoform I, isoform J, and isoform K do not interact with IL1RAPL1. Interacts (via the third immunoglobilin domain) with IL1RAP (via the first immunoglobilin domain); induces pre- and postsynaptic differentiation of neurons. A cleavage occurs, separating the extracellular domain from the transmembrane segment. This process called 'ectodomain shedding' is thought to be involved in receptor desensitization, signal transduction and/or membrane localization. Brain, kidney, heart, and some B-cell lines.

The protein localises to the membrane. It carries out the reaction O-phospho-L-tyrosyl-[protein] + H2O = L-tyrosyl-[protein] + phosphate. In terms of biological role, can bidirectionally induce pre- and post-synaptic differentiation of neurons by mediating interaction with IL1RAP and IL1RAPL1 trans-synaptically. Involved in pre-synaptic differentiation through interaction with SLITRK2. The sequence is that of Receptor-type tyrosine-protein phosphatase delta (Ptprd) from Mus musculus (Mouse).